We begin with the raw amino-acid sequence, 316 residues long: Transaldolase A (316 aa).

The active-site Schiff-base intermediate with substrate is the Lys-131.

This sequence belongs to the transaldolase family. Type 1 subfamily. Homodimer.

It is found in the cytoplasm. The catalysed reaction is D-sedoheptulose 7-phosphate + D-glyceraldehyde 3-phosphate = D-erythrose 4-phosphate + beta-D-fructose 6-phosphate. The protein operates within carbohydrate degradation; pentose phosphate pathway; D-glyceraldehyde 3-phosphate and beta-D-fructose 6-phosphate from D-ribose 5-phosphate and D-xylulose 5-phosphate (non-oxidative stage): step 2/3. Transaldolase is important for the balance of metabolites in the pentose-phosphate pathway. The polypeptide is Transaldolase A (Salmonella typhimurium (strain LT2 / SGSC1412 / ATCC 700720)).